The primary structure comprises 156 residues: Cyanate hydratase (156 aa).

Residues Arg-96, Glu-99, and Ser-122 contribute to the active site.

It belongs to the cyanase family. Homodecamer composed of five homodimers.

The catalysed reaction is cyanate + hydrogencarbonate + 3 H(+) = NH4(+) + 2 CO2. In terms of biological role, catalyzes the reaction of cyanate with bicarbonate to produce ammonia and carbon dioxide. This Escherichia coli O157:H7 protein is Cyanate hydratase (cynS).